A 158-amino-acid chain; its full sequence is 2-C-methyl-D-erythritol 2,4-cyclodiphosphate synthase (158 aa).

Aspartate 9 and histidine 11 together coordinate a divalent metal cation. 4-CDP-2-C-methyl-D-erythritol 2-phosphate is bound by residues 9-11 (DVH) and 35-36 (HS). Residue histidine 43 participates in a divalent metal cation binding. Residues 57–59 (DIG), 62–66 (FPDTD), 133–136 (TTTE), phenylalanine 140, and arginine 143 contribute to the 4-CDP-2-C-methyl-D-erythritol 2-phosphate site.

It belongs to the IspF family. As to quaternary structure, homotrimer. A divalent metal cation is required as a cofactor.

The catalysed reaction is 4-CDP-2-C-methyl-D-erythritol 2-phosphate = 2-C-methyl-D-erythritol 2,4-cyclic diphosphate + CMP. It functions in the pathway isoprenoid biosynthesis; isopentenyl diphosphate biosynthesis via DXP pathway; isopentenyl diphosphate from 1-deoxy-D-xylulose 5-phosphate: step 4/6. Its function is as follows. Involved in the biosynthesis of isopentenyl diphosphate (IPP) and dimethylallyl diphosphate (DMAPP), two major building blocks of isoprenoid compounds. Catalyzes the conversion of 4-diphosphocytidyl-2-C-methyl-D-erythritol 2-phosphate (CDP-ME2P) to 2-C-methyl-D-erythritol 2,4-cyclodiphosphate (ME-CPP) with a corresponding release of cytidine 5-monophosphate (CMP). In Haemophilus influenzae (strain PittGG), this protein is 2-C-methyl-D-erythritol 2,4-cyclodiphosphate synthase.